The following is a 182-amino-acid chain: Ribosome maturation factor RimM (182 aa).

The 80-residue stretch at 103–182 (EGDYYWKDLM…TIEVDWDPGF (80 aa)) folds into the PRC barrel domain.

It belongs to the RimM family. In terms of assembly, binds ribosomal protein uS19.

It localises to the cytoplasm. An accessory protein needed during the final step in the assembly of 30S ribosomal subunit, possibly for assembly of the head region. Essential for efficient processing of 16S rRNA. May be needed both before and after RbfA during the maturation of 16S rRNA. It has affinity for free ribosomal 30S subunits but not for 70S ribosomes. This is Ribosome maturation factor RimM from Klebsiella pneumoniae subsp. pneumoniae (strain ATCC 700721 / MGH 78578).